The primary structure comprises 195 residues: Large ribosomal subunit protein bL32m (195 aa).

Zn(2+) contacts are provided by Cys95, Cys98, Cys108, and Cys111.

Belongs to the bacterial ribosomal protein bL32 family. As to quaternary structure, component of the mitochondrial large ribosomal subunit (mt-LSU).

It is found in the mitochondrion. Component of the mitochondrial large ribosomal subunit (mt-LSU). The mitochondrial ribosome (mitoribosome) is a large ribonucleoprotein complex responsible for the synthesis of proteins inside mitochondria. This Drosophila melanogaster (Fruit fly) protein is Large ribosomal subunit protein bL32m (mRpL32).